Here is a 618-residue protein sequence, read N- to C-terminus: UvrABC system protein C (618 aa).

In terms of domain architecture, GIY-YIG spans 19–97 (SEPGIYRMLD…IKALRPKYNV (79 aa)). In terms of domain architecture, UVR spans 208–243 (QIILDALAERMKQAVNQLNFEEAAVLRDQIKNLRLI).

The protein belongs to the UvrC family. In terms of assembly, interacts with UvrB in an incision complex.

Its subcellular location is the cytoplasm. The UvrABC repair system catalyzes the recognition and processing of DNA lesions. UvrC both incises the 5' and 3' sides of the lesion. The N-terminal half is responsible for the 3' incision and the C-terminal half is responsible for the 5' incision. This chain is UvrABC system protein C, found in Legionella pneumophila (strain Paris).